The primary structure comprises 788 residues: Glucan 1,3-beta-glucosidase (788 aa).

The signal sequence occupies residues 1 to 42 (MRFSSLLACLGAVGIQAAAIPFQRRVDNTTDSGSLDAAQAAA). Residues N28, N233, N381, and N773 are each glycosylated (N-linked (GlcNAc...) asparagine).

Belongs to the glycosyl hydrolase 55 family.

It catalyses the reaction Successive hydrolysis of beta-D-glucose units from the non-reducing ends of (1-&gt;3)-beta-D-glucans, releasing alpha-glucose.. The protein is Glucan 1,3-beta-glucosidase (EXG1) of Cochliobolus carbonum (Maize leaf spot fungus).